The sequence spans 318 residues: DNA-directed RNA polymerase subunit alpha (318 aa).

The alpha N-terminal domain (alpha-NTD) stretch occupies residues 1–232 (MAHQRIVGPT…NLFSPLQNVR (232 aa)). The alpha C-terminal domain (alpha-CTD) stretch occupies residues 246–318 (KMTEVLVEEL…HLPKEKFTKD (73 aa)).

This sequence belongs to the RNA polymerase alpha chain family. As to quaternary structure, in plastids the minimal PEP RNA polymerase catalytic core is composed of four subunits: alpha, beta, beta', and beta''. When a (nuclear-encoded) sigma factor is associated with the core the holoenzyme is formed, which can initiate transcription.

Its subcellular location is the plastid. The protein localises to the chloroplast. It catalyses the reaction RNA(n) + a ribonucleoside 5'-triphosphate = RNA(n+1) + diphosphate. DNA-dependent RNA polymerase catalyzes the transcription of DNA into RNA using the four ribonucleoside triphosphates as substrates. The protein is DNA-directed RNA polymerase subunit alpha of Chlorokybus atmophyticus (Soil alga).